A 419-amino-acid polypeptide reads, in one-letter code: UDP-N-acetylmuramoylalanine--D-glutamate ligase (419 aa).

109 to 115 (GSTGKTT) lines the ATP pocket.

It belongs to the MurCDEF family.

The protein resides in the cytoplasm. The catalysed reaction is UDP-N-acetyl-alpha-D-muramoyl-L-alanine + D-glutamate + ATP = UDP-N-acetyl-alpha-D-muramoyl-L-alanyl-D-glutamate + ADP + phosphate + H(+). The protein operates within cell wall biogenesis; peptidoglycan biosynthesis. In terms of biological role, cell wall formation. Catalyzes the addition of glutamate to the nucleotide precursor UDP-N-acetylmuramoyl-L-alanine (UMA). The sequence is that of UDP-N-acetylmuramoylalanine--D-glutamate ligase from Chlamydia felis (strain Fe/C-56) (Chlamydophila felis).